The sequence spans 1028 residues: Contactin-3 (1028 aa).

The first 19 residues, 1 to 19, serve as a signal peptide directing secretion; the sequence is MMLSWKQLILLSFIGCLAG. 6 Ig-like C2-type domains span residues 32-117, 122-209, 227-313, 318-402, 408-497, and 499-593; these read PSNS…AKLQ, ENFK…RVLG, PKIE…GRLT, PYWL…AELK, PDFS…LVVT, and PTRI…AELI. 5 disulfides stabilise this stretch: Cys50–Cys100, Cys144–Cys196, Cys249–Cys297, Cys339–Cys386, and Cys431–Cys479. 2 N-linked (GlcNAc...) asparagine glycosylation sites follow: Asn65 and Asn193. N-linked (GlcNAc...) asparagine glycans are attached at residues Asn377, Asn468, and Asn489. A disulfide bridge connects residues Cys521 and Cys577. 4 consecutive Fibronectin type-III domains span residues 600 to 698, 703 to 800, 805 to 901, and 902 to 998; these read PPEN…TEEA, APSE…SAEE, APSH…TKKT, and PPSQ…TSMD. The segment at 684-714 is disordered; it reads GEPSLPSEKVRTEEAAPEIAPSEVSGGGGSR. N-linked (GlcNAc...) asparagine glycosylation is found at Asn765, Asn860, Asn895, Asn913, Asn931, and Asn956. Ser1002 is lipidated: GPI-anchor amidated serine. Positions 1003-1028 are cleaved as a propeptide — removed in mature form; the sequence is TSAISNIHPLSGYMSVLLFFIVNALW.

This sequence belongs to the immunoglobulin superfamily. Contactin family. Interacts with PTPRG. As to expression, specifically expressed in brain. Ectopically expressed in tumors expressing endogenous intracisternal A-type particles (IAPs).

It is found in the cell membrane. In terms of biological role, contactins mediate cell surface interactions during nervous system development. Has some neurite outgrowth-promoting activity. The polypeptide is Contactin-3 (Cntn3) (Mus musculus (Mouse)).